A 919-amino-acid chain; its full sequence is Glutamate receptor ionotropic, kainate 3 (919 aa).

The signal sequence occupies residues 1 to 31 (MTAPWRRLRSLVWEYWAGLLVCAFWIPDSRG). At 32–563 (MPHVIRIGGI…VFSFLNPLSP (532 aa)) the chain is on the extracellular side. N70, N76, N278, N381, N415, N426, and N433 each carry an N-linked (GlcNAc...) asparagine glycan. A disulfide bridge connects residues C99 and C350. 3 residues coordinate L-glutamate: P518, T520, and R525. N-linked (GlcNAc...) asparagine glycosylation is found at N548 and N551. Residues 564-584 (DIWMYVLLAYLGVSCVLFVIA) form a helical membrane-spanning segment. Over 585–636 (RFSPYEWYDAHPCNPGSEVVENNFTLLNSFWFGMGSLMQQGSELMPKALSTR) the chain is Cytoplasmic. Residues 637–657 (IIGGIWWFFTLIIISSYTANL) traverse the membrane as a helical segment. Over 658 to 820 (AAFLTVERME…KEASALGIQK (163 aa)) the chain is Extracellular. L-glutamate-binding residues include A691, T692, and E739. N752 carries N-linked (GlcNAc...) asparagine glycosylation. A helical transmembrane segment spans residues 821–841 (IGGIFIVLAAGLVLSVLVAVG). The Cytoplasmic portion of the chain corresponds to 842–919 (EFVYKLRKTA…CSTSLAPVFP (78 aa)). The residue at position 869 (S869) is a Phosphoserine. K887 participates in a covalent cross-link: Glycyl lysine isopeptide (Lys-Gly) (interchain with G-Cter in SUMO1).

Belongs to the glutamate-gated ion channel (TC 1.A.10.1) family. GRIK3 subfamily. In terms of assembly, homotetramer, and heterotetramer with either GRIK4 or GRIK5. Can form functional heteromeric receptors with GRIK2. Interacts with PRKCABP. Interacts with NETO2.

Its subcellular location is the cell membrane. It localises to the postsynaptic cell membrane. It carries out the reaction Ca(2+)(in) = Ca(2+)(out). Its function is as follows. Ionotropic glutamate receptor that functions as a cation-permeable ligand-gated ion channel, gated by L-glutamate and the glutamatergic agonist kainic acid. Binding of the excitatory neurotransmitter L-glutamate induces a conformation change, leading to the opening of the cation channel, and thereby converts the chemical signal to an electrical impulse. The receptor then desensitizes rapidly and enters a transient inactive state, characterized by the presence of bound agonist. In association with GRIK2, involved in presynaptic facilitation of glutamate release at hippocampal mossy fiber synapses. The chain is Glutamate receptor ionotropic, kainate 3 (GRIK3) from Macaca fascicularis (Crab-eating macaque).